The sequence spans 377 residues: Opsin-1 (377 aa).

The Extracellular portion of the chain corresponds to 1–58 (MDPGPGLAALQAWAAKSPAYGAANQTVVDKVPPDMMHMIDPHWYQFPPMNPLWHALLG). N-linked (GlcNAc...) asparagine glycosylation is present at Asn24. Residues 59–79 (FTIGVLGFVSISGNGMVIYIF) form a helical membrane-spanning segment. The Cytoplasmic portion of the chain corresponds to 80–92 (MSTKSLKTPSNLL). The helical transmembrane segment at 93-113 (VVNLAFSDFLMMCAMSPAMVV) threads the bilayer. Residues 114–129 (NCYYETWVWGPFACEL) are Extracellular-facing. Cys127 and Cys204 are disulfide-bonded. Residues 130-150 (YACAGSLFGCASIWTMTMIAF) traverse the membrane as a helical segment. The Cytoplasmic segment spans residues 151–169 (DRYNVIVKGIAAKPMTSNG). The helical transmembrane segment at 170–190 (ALLRILGIWVFSLAWTLLPFF) threads the bilayer. The Extracellular portion of the chain corresponds to 191–220 (GWNRYVPEGNMTACGTDYLSKSWVSRSYIL). An N-linked (GlcNAc...) asparagine glycan is attached at Asn200. The helical transmembrane segment at 221–241 (IYSVFVYFLPLLLIIYSYFFI) threads the bilayer. Topologically, residues 242–280 (VQAVAAHEKAMREQAKKMNVASLRSSEAANTSAECKLAK) are cytoplasmic. Residues 281 to 301 (VALMTISLWFMAWTPYLVINY) traverse the membrane as a helical segment. Over 302–312 (TGVFESAPISP) the chain is Extracellular. A helical membrane pass occupies residues 313 to 335 (LATIWGSLFAKANAVYNPIVYGI). Residues 336–377 (SHPKYQAALYAKFPSLQCQSAPEDAGSVASGTTAVSEEKPAA) are Cytoplasmic-facing. The interval 357–377 (PEDAGSVASGTTAVSEEKPAA) is disordered.

This sequence belongs to the G-protein coupled receptor 1 family. Opsin subfamily. In the retina, expression is abundant and uniform in the anterior-posterior and oblique cells of the retinulae, with some expression in the proximal cells. There is no expression in the dorsal rim retinulae (at protein level).

Its subcellular location is the cell projection. It is found in the rhabdomere membrane. Its function is as follows. Visual pigments are the light-absorbing molecules that mediate vision. They consist of an apoprotein, opsin, covalently linked to cis-retinal. May play a role in photoperiodic photoreception. This Manduca sexta (Tobacco hawkmoth) protein is Opsin-1 (OP1).